A 606-amino-acid polypeptide reads, in one-letter code: Phosphogluconate dehydratase (606 aa).

Residues C156 and C223 each contribute to the [4Fe-4S] cluster site.

This sequence belongs to the IlvD/Edd family. [4Fe-4S] cluster serves as cofactor.

It catalyses the reaction 6-phospho-D-gluconate = 2-dehydro-3-deoxy-6-phospho-D-gluconate + H2O. It functions in the pathway carbohydrate metabolism; Entner-Doudoroff pathway. Functionally, catalyzes the dehydration of 6-phospho-D-gluconate to 2-dehydro-3-deoxy-6-phospho-D-gluconate. The sequence is that of Phosphogluconate dehydratase from Rhizobium meliloti (strain 1021) (Ensifer meliloti).